Consider the following 160-residue polypeptide: Phosphopantetheine adenylyltransferase (160 aa).

Serine 9 is a binding site for substrate. ATP-binding positions include 9 to 10 (SF) and histidine 17. Positions 41, 73, and 87 each coordinate substrate. Residues 88-90 (GLR), glutamate 98, and 122-128 (YSFVSSS) each bind ATP.

The protein belongs to the bacterial CoaD family. As to quaternary structure, homohexamer. Requires Mg(2+) as cofactor.

It is found in the cytoplasm. It carries out the reaction (R)-4'-phosphopantetheine + ATP + H(+) = 3'-dephospho-CoA + diphosphate. The protein operates within cofactor biosynthesis; coenzyme A biosynthesis; CoA from (R)-pantothenate: step 4/5. In terms of biological role, reversibly transfers an adenylyl group from ATP to 4'-phosphopantetheine, yielding dephospho-CoA (dPCoA) and pyrophosphate. The polypeptide is Phosphopantetheine adenylyltransferase (Mycolicibacterium gilvum (strain PYR-GCK) (Mycobacterium gilvum (strain PYR-GCK))).